Reading from the N-terminus, the 859-residue chain is Cadherin-related family member 1 (859 aa).

An N-terminal signal peptide occupies residues 1 to 19; sequence MRRCRWAALALGLLRLCLA. The Extracellular portion of the chain corresponds to 20–700; sequence QANFAPHFFD…LIQTKDNPMK (681 aa). 6 consecutive Cadherin domains span residues 36 to 135, 136 to 246, 247 to 353, 359 to 472, 473 to 576, and 573 to 688; these read NGNM…APRF, IQEP…APVF, VGTP…PPTF, PQNR…VPKF, DSLY…PPQF, and PPQF…SPMA. 2 N-linked (GlcNAc...) asparagine glycosylation sites follow: Asn58 and Asn89. A glycan (N-linked (GlcNAc...) asparagine) is linked at Asn296. A helical membrane pass occupies residues 701–721; it reads AVGVLAGTMATVVAITVLIST. The Cytoplasmic segment spans residues 722–859; that stretch reads ATFWRNKKSN…KKSVHNKAYF (138 aa). The interval 770–838 is disordered; sequence KEKPPNENCN…PKTMGSPVQS (69 aa). Low complexity predominate over residues 775–791; it reads NENCNNNSPESSLLPRA.

As to quaternary structure, interacts with PROM1. Undergoes proteolytic cleavage; produces a soluble 95 kDa N-terminal fragment and a 25 kDa cell-associated C-terminal fragment.

The protein resides in the cell membrane. In terms of biological role, potential calcium-dependent cell-adhesion protein. May be required for the structural integrity of the outer segment (OS) of photoreceptor cells. In Homo sapiens (Human), this protein is Cadherin-related family member 1.